The following is a 431-amino-acid chain: Phosphoribosylamine--glycine ligase (431 aa).

The ATP-grasp domain maps to 109 to 316 (KDFLARHGIP…LVDLLEAAID (208 aa)). 135-196 (VREKGTPIVV…EEFLDGEEAS (62 aa)) contributes to the ATP binding site. E286 and N288 together coordinate Mg(2+).

The protein belongs to the GARS family. Mg(2+) is required as a cofactor. Requires Mn(2+) as cofactor.

It catalyses the reaction 5-phospho-beta-D-ribosylamine + glycine + ATP = N(1)-(5-phospho-beta-D-ribosyl)glycinamide + ADP + phosphate + H(+). The protein operates within purine metabolism; IMP biosynthesis via de novo pathway; N(1)-(5-phospho-D-ribosyl)glycinamide from 5-phospho-alpha-D-ribose 1-diphosphate: step 2/2. The protein is Phosphoribosylamine--glycine ligase of Xanthomonas axonopodis pv. citri (strain 306).